A 368-amino-acid polypeptide reads, in one-letter code: sn-1 linoleoyl-lipid 6-desaturase (368 aa).

Transmembrane regions (helical) follow at residues 47 to 67 and 68 to 88; these read IILAWVVSAWTFVVFGPDVLW and MKLLGCIVLGFGVSAVGFNIS. The Histidine box-1 motif lies at 89–93; the sequence is HDGNH. Residues 124–129 carry the Histidine box-2 motif; it reads HNVLHH. 3 consecutive transmembrane segments (helical) span residues 164–184, 204–224, and 233–253; these read WFIWFVYPFIPYYWSIADVQT, IATLLAFKAFGVAVFLIIPIA, and VIGASIVYMTHGLVACVVFML. The short motif at 305 to 309 is the Histidine box-3 element; the sequence is HHLFP.

The protein belongs to the fatty acid desaturase type 2 family. Fe(2+) is required as a cofactor.

Its subcellular location is the cell inner membrane. The protein resides in the cellular thylakoid membrane. The catalysed reaction is a 1-[(9Z,12Z)-octadecdienoyl]-2-acyl-glycerolipid + 2 reduced [2Fe-2S]-[ferredoxin] + O2 + 2 H(+) = a 1-[(6Z,9Z,12Z)-octadectrienoyl]-2-acyl-glycerolipid + 2 oxidized [2Fe-2S]-[ferredoxin] + 2 H2O. It functions in the pathway lipid metabolism; polyunsaturated fatty acid biosynthesis. Its activity is regulated as follows. Activity requires ferredoxin, which is the natural electron donor, or cytochrome b5. In addition, activity is increased in the presence of the intermediate electron donors, NADPH and FADH(2). In terms of biological role, desaturase involved in fatty acid biosynthesis. Introduces a double bond at carbon 6 of linoleoyl group (18:2) attached to the sn-1 position of the glycerol moiety of membrane glycerolipids, leading to the formation of gamma-linolenic acid (GLA). This is sn-1 linoleoyl-lipid 6-desaturase from Arthrospira platensis (Spirulina platensis).